The chain runs to 112 residues: uncharacterized protein (112 aa).

It to U.parvum UU089.1.

This is an uncharacterized protein from Synechocystis sp. (strain ATCC 27184 / PCC 6803 / Kazusa).